Reading from the N-terminus, the 40-residue chain is Photosystem II reaction center protein J (40 aa).

Residues 8–28 (IPLWLIGTVTGIPVIGLVGIF) traverse the membrane as a helical segment.

It belongs to the PsbJ family. In terms of assembly, PSII is composed of 1 copy each of membrane proteins PsbA, PsbB, PsbC, PsbD, PsbE, PsbF, PsbH, PsbI, PsbJ, PsbK, PsbL, PsbM, PsbT, PsbX, PsbY, PsbZ, Psb30/Ycf12, at least 3 peripheral proteins of the oxygen-evolving complex and a large number of cofactors. It forms dimeric complexes.

The protein localises to the plastid. The protein resides in the chloroplast thylakoid membrane. Functionally, one of the components of the core complex of photosystem II (PSII). PSII is a light-driven water:plastoquinone oxidoreductase that uses light energy to abstract electrons from H(2)O, generating O(2) and a proton gradient subsequently used for ATP formation. It consists of a core antenna complex that captures photons, and an electron transfer chain that converts photonic excitation into a charge separation. This Cucumis sativus (Cucumber) protein is Photosystem II reaction center protein J.